The following is a 157-amino-acid chain: uncharacterized protein (157 aa).

The segment covering 1 to 11 has biased composition (basic and acidic residues); sequence MGDLEGQDRPD. The disordered stretch occupies residues 1 to 22; the sequence is MGDLEGQDRPDPISTMVGPSGT.

It is found in the mitochondrion. This is an uncharacterized protein from Arabidopsis thaliana (Mouse-ear cress).